The primary structure comprises 641 residues: Lipase (641 aa).

An N-terminal signal peptide occupies residues 1–38 (MKETKHQHTFSIRKSAYGAASVMVASCIFVIGGGVAEA). Disordered stretches follow at residues 41 to 174 (STTQ…PSVD) and 206 to 246 (TVSP…KPTV). The segment covering 53-64 (QTSQQETHTHQT) has biased composition (low complexity). A compositionally biased stretch (basic and acidic residues) spans 73-94 (TPEHVDDSKEATPLPEKAESPK). Composition is skewed to polar residues over residues 95-106 (TEVTVQPSSHTQ) and 127-139 (PEST…VESN). Basic and acidic residues predominate over residues 140–165 (KATENEMSPVEHHASNVEKREDRLET). The span at 227–239 (ENTTAQNKFTSQA) shows a compositional bias: polar residues. Serine 369 serves as the catalytic Nucleophile. Glycine 535 serves as a coordination point for Ca(2+). Residue aspartate 559 is the Charge relay system of the active site. Residue aspartate 599 participates in Ca(2+) binding. Histidine 600 acts as the Charge relay system in catalysis. Positions 602, 607, and 610 each coordinate Ca(2+).

This sequence belongs to the AB hydrolase superfamily. Lipase family. It depends on Ca(2+) as a cofactor.

It is found in the secreted. It catalyses the reaction a triacylglycerol + H2O = a diacylglycerol + a fatty acid + H(+). The catalysed reaction is a 1,2-diacyl-sn-glycero-3-phosphocholine + H2O = a 2-acyl-sn-glycero-3-phosphocholine + a fatty acid + H(+). In terms of biological role, has a broad substrate specificity hydrolyzing a variety of triglycerides and phosphatidylcholines. This is Lipase (lip) from Staphylococcus hyicus.